The following is a 255-amino-acid chain: Thiazole synthase (255 aa).

The active-site Schiff-base intermediate with DXP is the Lys96. 1-deoxy-D-xylulose 5-phosphate-binding positions include Gly157, 183-184 (AG), and 205-206 (NT).

This sequence belongs to the ThiG family. In terms of assembly, homotetramer. Forms heterodimers with either ThiH or ThiS.

Its subcellular location is the cytoplasm. The enzyme catalyses [ThiS sulfur-carrier protein]-C-terminal-Gly-aminoethanethioate + 2-iminoacetate + 1-deoxy-D-xylulose 5-phosphate = [ThiS sulfur-carrier protein]-C-terminal Gly-Gly + 2-[(2R,5Z)-2-carboxy-4-methylthiazol-5(2H)-ylidene]ethyl phosphate + 2 H2O + H(+). The protein operates within cofactor biosynthesis; thiamine diphosphate biosynthesis. Its function is as follows. Catalyzes the rearrangement of 1-deoxy-D-xylulose 5-phosphate (DXP) to produce the thiazole phosphate moiety of thiamine. Sulfur is provided by the thiocarboxylate moiety of the carrier protein ThiS. In vitro, sulfur can be provided by H(2)S. This is Thiazole synthase from Geobacillus thermodenitrificans (strain NG80-2).